A 414-amino-acid chain; its full sequence is Mannan endo-1,4-beta-mannosidase 3 (414 aa).

The N-terminal stretch at 1-19 is a signal peptide; it reads MKCLCFVVLLAILIAQNSS. N-linked (GlcNAc...) asparagine glycosylation is found at asparagine 17 and asparagine 75. Position 87 (tryptophan 87) interacts with substrate. Residues asparagine 133 and asparagine 153 are each glycosylated (N-linked (GlcNAc...) asparagine). Asparagine 202 contacts substrate. Residue glutamate 203 is the Proton donor of the active site. Position 283 (tyrosine 283) interacts with substrate. The active-site Nucleophile is glutamate 323. Asparagine 343 carries N-linked (GlcNAc...) asparagine glycosylation. Tryptophan 365 is a substrate binding site. N-linked (GlcNAc...) asparagine glycosylation is present at asparagine 386.

This sequence belongs to the glycosyl hydrolase 5 (cellulase A) family. As to expression, expressed in leaves, flowers, siliques and seeds.

It is found in the secreted. It catalyses the reaction Random hydrolysis of (1-&gt;4)-beta-D-mannosidic linkages in mannans, galactomannans and glucomannans.. The chain is Mannan endo-1,4-beta-mannosidase 3 (MAN3) from Arabidopsis thaliana (Mouse-ear cress).